The following is a 69-amino-acid chain: U2-agatoxin-Ao1o (69 aa).

An N-terminal signal peptide occupies residues 1–20 (MKAIISLLLISAMVFSMFEA). Positions 21 to 34 (VPVRRRFTAFEGER) are excised as a propeptide. 3 cysteine pairs are disulfide-bonded: Cys36-Cys52, Cys43-Cys57, and Cys51-Cys67. The residue at position 68 (Leu68) is a Leucine amide.

It belongs to the neurotoxin 01 (U2-agtx) family. Expressed by the venom gland.

Its subcellular location is the secreted. Insect active toxin causing rapid but reversible paralysis in crickets. No activity shown in mammals. Does not show effect on mammalian voltage-gated calcium channels. The polypeptide is U2-agatoxin-Ao1o (Agelena orientalis (Funnel-web spider)).